The following is a 161-amino-acid chain: Endoribonuclease YbeY (161 aa).

Zn(2+)-binding residues include histidine 120, histidine 124, and histidine 130.

It belongs to the endoribonuclease YbeY family. The cofactor is Zn(2+).

It is found in the cytoplasm. Its function is as follows. Single strand-specific metallo-endoribonuclease involved in late-stage 70S ribosome quality control and in maturation of the 3' terminus of the 16S rRNA. In Erythrobacter litoralis (strain HTCC2594), this protein is Endoribonuclease YbeY.